Here is a 231-residue protein sequence, read N- to C-terminus: Cytidylate kinase (231 aa).

11–19 (GHSSCGKST) contributes to the ATP binding site.

This sequence belongs to the cytidylate kinase family. Type 1 subfamily.

Its subcellular location is the cytoplasm. It catalyses the reaction CMP + ATP = CDP + ADP. The catalysed reaction is dCMP + ATP = dCDP + ADP. The protein is Cytidylate kinase of Porphyromonas gingivalis (strain ATCC BAA-308 / W83).